The primary structure comprises 435 residues: Casein kinase 1-like protein 12 (435 aa).

Positions 9 to 278 (YRLGRKIGSG…LKRIFRDLFI (270 aa)) constitute a Protein kinase domain. ATP-binding positions include 15–23 (IGSGSFGEI) and lysine 38. Aspartate 128 functions as the Proton acceptor in the catalytic mechanism. Disordered regions lie at residues 313-363 (VGTS…RGPM) and 394-414 (LRNS…TRKH).

The protein belongs to the protein kinase superfamily. CK1 Ser/Thr protein kinase family. Casein kinase I subfamily. In terms of assembly, monomer. In terms of processing, autophosphorylated.

The protein localises to the cytoplasm. The catalysed reaction is L-seryl-[protein] + ATP = O-phospho-L-seryl-[protein] + ADP + H(+). It catalyses the reaction L-threonyl-[protein] + ATP = O-phospho-L-threonyl-[protein] + ADP + H(+). In terms of biological role, casein kinases are operationally defined by their preferential utilization of acidic proteins such as caseins as substrates. It can phosphorylate a large number of proteins. The chain is Casein kinase 1-like protein 12 from Arabidopsis thaliana (Mouse-ear cress).